Consider the following 372-residue polypeptide: MEYGLDLEYSFNEFLKGFGLSSEIAHIIWLPLPMLLVLVAAVVGVLVTVWLERKISAAAQQRIGPEYAGALGVLQPIADGLKLLVKEDIIPAKADGILFTAGPILVLVPVILSWLIVPFGQNLLISNVGIGIFLWIALSSIQPIGLLMSGYASNNKYSLLGGLRAAAQSISYEIPLALSVLAIVLMTNSLSTIDIVNQQSGAGILSWNIWRQPVGFIVFWICALAECERLPFDLPEAEEELVAGYQTEYAGMKFALFYLGSYINLILSALLVSILYLGGWGFPIPVELIAKFLNLPINAPLIQVFTASIGIVMTVLKAYLLVFIAILLRWTTPRVRIDQLLDLGWKFLLPISLANLLITAGLKLAFPQFFGG.

Helical transmembrane passes span 27-47, 97-117, 128-148, 176-196, 204-224, 266-286, 308-328, and 347-367; these read IIWLPLPMLLVLVAAVVGVLV, ILFTAGPILVLVPVILSWLIV, VGIGIFLWIALSSIQPIGLLM, LALSVLAIVLMTNSLSTIDIV, ILSWNIWRQPVGFIVFWICAL, ILSALLVSILYLGGWGFPIPV, SIGIVMTVLKAYLLVFIAILL, and FLLPISLANLLITAGLKLAFP.

Belongs to the complex I subunit 1 family. NDH-1 is composed of at least 11 different subunits.

The protein resides in the cellular thylakoid membrane. The enzyme catalyses a plastoquinone + NADH + (n+1) H(+)(in) = a plastoquinol + NAD(+) + n H(+)(out). It catalyses the reaction a plastoquinone + NADPH + (n+1) H(+)(in) = a plastoquinol + NADP(+) + n H(+)(out). In terms of biological role, NDH-1 shuttles electrons from an unknown electron donor, via FMN and iron-sulfur (Fe-S) centers, to quinones in the respiratory and/or the photosynthetic chain. The immediate electron acceptor for the enzyme in this species is believed to be plastoquinone. Couples the redox reaction to proton translocation, and thus conserves the redox energy in a proton gradient. This Prochlorococcus marinus (strain MIT 9301) protein is NAD(P)H-quinone oxidoreductase subunit 1.